A 243-amino-acid chain; its full sequence is Probable 6-oxopurine nucleoside phosphorylase (243 aa).

Residues threonine 8 and arginine 48–histidine 49 each bind phosphate. Methionine 174 provides a ligand contact to substrate. Threonine 175 is a binding site for phosphate. Asparagine 198–alanine 200 provides a ligand contact to substrate.

This sequence belongs to the PNP/MTAP phosphorylase family. MTAP subfamily. In terms of assembly, homohexamer. Dimer of a homotrimer.

The catalysed reaction is a purine D-ribonucleoside + phosphate = a purine nucleobase + alpha-D-ribose 1-phosphate. Its pathway is purine metabolism; purine nucleoside salvage. Purine nucleoside phosphorylase which is highly specific for 6-oxopurine nucleosides. Cleaves guanosine or inosine to respective bases and sugar-1-phosphate molecules. Involved in purine salvage. The sequence is that of Probable 6-oxopurine nucleoside phosphorylase from Archaeoglobus fulgidus (strain ATCC 49558 / DSM 4304 / JCM 9628 / NBRC 100126 / VC-16).